Consider the following 517-residue polypeptide: T-box transcription factor TBX5 (517 aa).

Residues Met-1–Phe-46 form a disordered region. Over residues Leu-15 to Pro-28 the composition is skewed to basic and acidic residues. Residues Ala-34–Ala-45 show a composition bias toward low complexity. The segment at residues Leu-58–Gly-238 is a DNA-binding region (T-box). Disordered regions lie at residues His-270–Ala-313 and Ser-331–Thr-369. Residues Ser-271–Ser-300 show a composition bias toward polar residues. Position 338 is an N6-acetyllysine (Lys-338). Positions Tyr-357–Thr-369 are enriched in polar residues.

In terms of assembly, monomer. Homodimer (via the T-box); binds DNA as homodimer. Interacts (via the T-box) with NKX2-5 (via the homeobox); this complex binds DNA. Interacts with GATA4. Interacts with KAT2A and KAT2B. Acetylation at Lys-338 by KAT2A and KAT2B promotes nuclear retention.

It localises to the nucleus. The protein localises to the cytoplasm. Its function is as follows. DNA-binding protein that regulates the transcription of several genes and is involved in heart development and limb pattern formation. Binds to the core DNA motif of NPPA promoter. In Rattus norvegicus (Rat), this protein is T-box transcription factor TBX5 (Tbx5).